Reading from the N-terminus, the 2335-residue chain is Histone-lysine N-methyltransferase ATXR3 (2335 aa).

Disordered regions lie at residues 30-142 (NESK…FKDE), 332-355 (STGN…SYAD), 371-556 (CSRS…SSSK), and 902-961 (DQVP…KTDT). 2 stretches are compositionally biased toward polar residues: residues 31-46 (ESKT…TSIA) and 53-62 (QPANKPSASS). Over residues 65 to 84 (VKKKRIVKVIRKVVKRRPKQ) the composition is skewed to basic residues. A Nuclear localization signal 1 motif is present at residues 67 to 74 (KKRIVKVI). Residues 97–112 (PPSQVVQLPAESQLQI) show a composition bias toward polar residues. Basic and acidic residues-rich tracts occupy residues 340 to 353 (HGAE…KHSY), 371 to 390 (CSRS…RLYR), and 430 to 452 (WSPH…RERS). Residues 461–475 (HARKRSPRDRRHHDY) are compositionally biased toward basic residues. 3 stretches are compositionally biased toward basic and acidic residues: residues 485–498 (SPHD…RRDY), 507–548 (QSDR…ESNG), and 910–921 (PRAKVRSKERCP). A Nuclear localization signal 2 motif is present at residues 527-534 (ERRDCQTG). The segment covering 922 to 932 (SRPARPSPASS) has biased composition (low complexity). Polar residues predominate over residues 941–961 (SHSQSTASTGQDSQGLWKTDT). The Nuclear localization signal 3 signature appears at 1382–1389 (ARRSSAIL). Positions 1532 to 1572 (NRKSFSSESDTSSELSDNGKSDNYSSASASESESDIRSEGR) are disordered. Over residues 1535-1547 (SFSSESDTSSELS) the composition is skewed to low complexity. The region spanning 1765–1904 (KEIESRSDDK…YGEEITFDYN (140 aa)) is the SET domain. Position 1868 (C1868) interacts with Zn(2+). Y1903 serves as a coordination point for S-adenosyl-L-methionine. Positions 1914–1930 (EASVCLCGSQVCRGSYL) constitute a Post-SET domain. The Zn(2+) site is built by C1918, C1920, and C1925.

This sequence belongs to the class V-like SAM-binding methyltransferase superfamily. Histone-lysine methyltransferase family. TRX/MLL subfamily. Expressed in roots, leaves, stems and inflorescences.

It localises to the nucleus. It carries out the reaction L-lysyl(4)-[histone H3] + 3 S-adenosyl-L-methionine = N(6),N(6),N(6)-trimethyl-L-lysyl(4)-[histone H3] + 3 S-adenosyl-L-homocysteine + 3 H(+). Its function is as follows. Histone methyltransferase specifically required for trimethylation of 'Lys-4' of histone H3 (H3K4me3) and is crucial for both sporophyte and gametophyte development. Function as a diurnal 'writer' to counteract the nocturne 'eraser' demethylase activity of JMJ14 thus orchestrating the circadian rhythm of histone modifications (e.g. H3K4me3) and modulating the rhythmic expression of diurnal target genes; this mechanism relies also on the circadian clock oscillators CCA1 and LHY. The chain is Histone-lysine N-methyltransferase ATXR3 from Arabidopsis thaliana (Mouse-ear cress).